The following is a 44-amino-acid chain: Photosystem I reaction center subunit IX (44 aa).

A helical transmembrane segment spans residues 7–27; sequence YLSVAPVLSTLWFGALAGLLI.

The protein belongs to the PsaJ family.

The protein localises to the plastid. Its subcellular location is the chloroplast thylakoid membrane. Its function is as follows. May help in the organization of the PsaE and PsaF subunits. In Oryza nivara (Indian wild rice), this protein is Photosystem I reaction center subunit IX.